We begin with the raw amino-acid sequence, 488 residues long: 3-octaprenyl-4-hydroxybenzoate carboxy-lyase (488 aa).

Asn172 is a Mn(2+) binding site. Prenylated FMN contacts are provided by residues 175–177, 189–191, and 194–195; these read IYR, RWL, and RG. Glu238 serves as a coordination point for Mn(2+). Catalysis depends on Asp287, which acts as the Proton donor.

Belongs to the UbiD family. In terms of assembly, homohexamer. Prenylated FMN is required as a cofactor. Mn(2+) serves as cofactor.

The protein localises to the cell membrane. The enzyme catalyses a 4-hydroxy-3-(all-trans-polyprenyl)benzoate + H(+) = a 2-(all-trans-polyprenyl)phenol + CO2. It functions in the pathway cofactor biosynthesis; ubiquinone biosynthesis. In terms of biological role, catalyzes the decarboxylation of 3-octaprenyl-4-hydroxy benzoate to 2-octaprenylphenol, an intermediate step in ubiquinone biosynthesis. The protein is 3-octaprenyl-4-hydroxybenzoate carboxy-lyase of Pseudomonas fluorescens (strain Pf0-1).